The primary structure comprises 157 residues: SsrA-binding protein (157 aa).

Residues 133–157 (LHDKRETAKERDWQRDKARLMRDKG) are disordered. The span at 135-157 (DKRETAKERDWQRDKARLMRDKG) shows a compositional bias: basic and acidic residues.

The protein belongs to the SmpB family.

Its subcellular location is the cytoplasm. Its function is as follows. Required for rescue of stalled ribosomes mediated by trans-translation. Binds to transfer-messenger RNA (tmRNA), required for stable association of tmRNA with ribosomes. tmRNA and SmpB together mimic tRNA shape, replacing the anticodon stem-loop with SmpB. tmRNA is encoded by the ssrA gene; the 2 termini fold to resemble tRNA(Ala) and it encodes a 'tag peptide', a short internal open reading frame. During trans-translation Ala-aminoacylated tmRNA acts like a tRNA, entering the A-site of stalled ribosomes, displacing the stalled mRNA. The ribosome then switches to translate the ORF on the tmRNA; the nascent peptide is terminated with the 'tag peptide' encoded by the tmRNA and targeted for degradation. The ribosome is freed to recommence translation, which seems to be the essential function of trans-translation. The polypeptide is SsrA-binding protein (Methylobacterium sp. (strain 4-46)).